The sequence spans 92 residues: Progonadoliberin-1 (92 aa).

Positions 1 to 23 (MKPIQKLLAGLILLTWCVEGCSS) are cleaved as a signal peptide. Gln-24 carries the post-translational modification Pyrrolidone carboxylic acid. Position 33 is a glycine amide (Gly-33).

The protein belongs to the GnRH family. In terms of processing, the precursor is cleaved by ACE, which removes the Gly-Lys-Arg peptide at the C-terminus, leading to mature hormone. The mature form of Gonadoliberin-1 is also cleaved and degraded by ACE.

It localises to the secreted. Stimulates the secretion of gonadotropins; it stimulates the secretion of both luteinizing and follicle-stimulating hormones. This Homo sapiens (Human) protein is Progonadoliberin-1 (GNRH1).